A 99-amino-acid chain; its full sequence is Small ribosomal subunit protein uS14c (99 aa).

A disordered region spans residues 46–66; the sequence is LQSSPRNSAPTRLHRRCSSTG.

This sequence belongs to the universal ribosomal protein uS14 family. Part of the 30S ribosomal subunit.

It is found in the plastid. The protein resides in the chloroplast. In terms of biological role, binds 16S rRNA, required for the assembly of 30S particles. The protein is Small ribosomal subunit protein uS14c of Pinus thunbergii (Japanese black pine).